The following is a 254-amino-acid chain: MVPPETNQWFALMIGNTRQHWALFRGEHLSRTWHLTPEELACNPAQDYPNLPCWGASVGSVPLHQVYPRAIALTLEDIPLPQMYPTLGLDRALALWGALQVYGAPVCVVDAGTALTLTLANDRREFAGGVILPGVGLMARALADYTAALPYVPLPTEPPRRWGTTTTTAIASGLYYGTAAILQAYLDAFLQEFPQGTVIVTGGDRPFVSELLRTFLDSDRWCEDDHLVFWGIRALRNPAAKIEMHPMERIDEFH.

Residue 13 to 20 coordinates ATP; the sequence is MIGNTRQH. Substrate contacts are provided by residues Tyr-84 and 88 to 91; that span reads GLDR. Asp-90 functions as the Proton acceptor in the catalytic mechanism. Asp-110 contributes to the K(+) binding site. Residue Thr-113 coordinates ATP. Thr-166 contributes to the substrate binding site.

The protein belongs to the type III pantothenate kinase family. In terms of assembly, homodimer. NH4(+) is required as a cofactor. The cofactor is K(+).

Its subcellular location is the cytoplasm. The catalysed reaction is (R)-pantothenate + ATP = (R)-4'-phosphopantothenate + ADP + H(+). It participates in cofactor biosynthesis; coenzyme A biosynthesis; CoA from (R)-pantothenate: step 1/5. Functionally, catalyzes the phosphorylation of pantothenate (Pan), the first step in CoA biosynthesis. The chain is Type III pantothenate kinase from Thermosynechococcus vestitus (strain NIES-2133 / IAM M-273 / BP-1).